Consider the following 157-residue polypeptide: MSDKPAYLTRDGRARLEAELEELVTKGRKEIAERINAAKELGDISESGEYEDAKNQQAHLEGRIREIKSILARAQIIDEENGDNHEVRIGSRVTVRIDGEDGEETWTIVGSTEAKPSEGKISNESPIGSALLGKRPRQKVTVETPSGTMKLTIVDIQ.

The stretch at 13–75 forms a coiled coil; the sequence is RARLEAELEE…EIKSILARAQ (63 aa). A disordered region spans residues 113 to 142; it reads EAKPSEGKISNESPIGSALLGKRPRQKVTV.

This sequence belongs to the GreA/GreB family.

Necessary for efficient RNA polymerase transcription elongation past template-encoded arresting sites. The arresting sites in DNA have the property of trapping a certain fraction of elongating RNA polymerases that pass through, resulting in locked ternary complexes. Cleavage of the nascent transcript by cleavage factors such as GreA or GreB allows the resumption of elongation from the new 3'terminus. GreA releases sequences of 2 to 3 nucleotides. This is Transcription elongation factor GreA from Roseiflexus sp. (strain RS-1).